Reading from the N-terminus, the 246-residue chain is Small ribosomal subunit protein uS2 (246 aa).

It belongs to the universal ribosomal protein uS2 family.

This is Small ribosomal subunit protein uS2 from Burkholderia pseudomallei (strain 668).